The chain runs to 548 residues: Glucose-6-phosphate isomerase (548 aa).

The active-site Proton donor is the Glu-355. Catalysis depends on residues His-386 and Lys-514.

Belongs to the GPI family.

The protein resides in the cytoplasm. It catalyses the reaction alpha-D-glucose 6-phosphate = beta-D-fructose 6-phosphate. The protein operates within carbohydrate biosynthesis; gluconeogenesis. It participates in carbohydrate degradation; glycolysis; D-glyceraldehyde 3-phosphate and glycerone phosphate from D-glucose: step 2/4. Catalyzes the reversible isomerization of glucose-6-phosphate to fructose-6-phosphate. This Hamiltonella defensa subsp. Acyrthosiphon pisum (strain 5AT) protein is Glucose-6-phosphate isomerase.